The primary structure comprises 585 residues: Cysteine/serine-rich nuclear protein 3 (585 aa).

Disordered regions lie at residues 1 to 52 (MSGI…TPSS) and 335 to 395 (ELDC…GFVE). The span at 30–40 (SSESADSGDSV) shows a compositional bias: low complexity. The segment covering 41-52 (NPSTSSHFTPSS) has biased composition (polar residues). Positions 335–349 (ELDCQGEEEEEEEDG) are enriched in acidic residues. The span at 351–366 (SFCSGVTDSSTQSLAP) shows a compositional bias: polar residues. A compositionally biased stretch (acidic residues) spans 368–389 (ESDEEEEEEEEEEEEEDDDDDK).

It belongs to the AXUD1 family.

The protein resides in the nucleus. Functionally, binds to the consensus sequence 5'-AGAGTG-3' and has transcriptional activator activity. Plays a role in apoptosis. In Homo sapiens (Human), this protein is Cysteine/serine-rich nuclear protein 3 (CSRNP3).